A 176-amino-acid chain; its full sequence is ATP-dependent protease subunit HslV (176 aa).

The active site involves T5. 3 residues coordinate Na(+): A161, C164, and T167.

This sequence belongs to the peptidase T1B family. HslV subfamily. In terms of assembly, a double ring-shaped homohexamer of HslV is capped on each side by a ring-shaped HslU homohexamer. The assembly of the HslU/HslV complex is dependent on binding of ATP.

It localises to the cytoplasm. It carries out the reaction ATP-dependent cleavage of peptide bonds with broad specificity.. Allosterically activated by HslU binding. Protease subunit of a proteasome-like degradation complex believed to be a general protein degrading machinery. The sequence is that of ATP-dependent protease subunit HslV from Caldicellulosiruptor saccharolyticus (strain ATCC 43494 / DSM 8903 / Tp8T 6331).